A 347-amino-acid chain; its full sequence is Aurora kinase A- and ninein-interacting protein (347 aa).

The interval 182 to 347 is interaction with AURKA; that stretch reads QREAKRKREG…DSEGNRVIRH (166 aa). The interval 273-347 is interaction with RBBP8/CtIP; the sequence is RDSWSQLFTE…DSEGNRVIRH (75 aa). A Phosphoserine modification is found at S284. Over residues 301 to 322 the composition is skewed to polar residues; the sequence is VTNARNQGSGQFPDSPQAQGQD. Positions 301–325 are disordered; sequence VTNARNQGSGQFPDSPQAQGQDGPT.

This sequence belongs to the AUNIP family. As to quaternary structure, interacts (via C-terminus) with AURKA (via C-terminus). Interacts (via N-terminus) with NIN; this interaction blocks NIN phosphorylation by both AURKA and GSK3B. Identified in a complex with NIN and AURKA. Interacts with RBBP8/CtIP.

The protein resides in the nucleus. Its subcellular location is the chromosome. It localises to the cytoplasm. The protein localises to the cytoskeleton. It is found in the microtubule organizing center. The protein resides in the centrosome. Its subcellular location is the spindle pole. Functionally, DNA-binding protein that accumulates at DNA double-strand breaks (DSBs) following DNA damage and promotes DNA resection and homologous recombination. Serves as a sensor of DNA damage: binds DNA with a strong preference for DNA substrates that mimic structures generated at stalled replication forks, and anchors RBBP8/CtIP to DSB sites to promote DNA end resection and ensuing homologous recombination repair. Inhibits non-homologous end joining (NHEJ). Required for the dynamic movement of AURKA at the centrosomes and spindle apparatus during the cell cycle. The sequence is that of Aurora kinase A- and ninein-interacting protein from Rattus norvegicus (Rat).